We begin with the raw amino-acid sequence, 156 residues long: Small ribosomal subunit protein uS7 (156 aa).

This sequence belongs to the universal ribosomal protein uS7 family. As to quaternary structure, part of the 30S ribosomal subunit. Contacts proteins S9 and S11.

In terms of biological role, one of the primary rRNA binding proteins, it binds directly to 16S rRNA where it nucleates assembly of the head domain of the 30S subunit. Is located at the subunit interface close to the decoding center, probably blocks exit of the E-site tRNA. This chain is Small ribosomal subunit protein uS7, found in Streptococcus agalactiae serotype Ia (strain ATCC 27591 / A909 / CDC SS700).